Reading from the N-terminus, the 1688-residue chain is Voltage-dependent L-type calcium channel subunit alpha-1S (1688 aa).

Residues 1–24 (MDAMGSAAEEGTQKKKRRPLVPPP) form a disordered region. Residues 1–51 (MDAMGSAAEEGTQKKKRRPLVPPPPRPPRALFCLGLQNPFRKFCINIVEWK) are Cytoplasmic-facing. The I repeat unit spans residues 38–335 (NPFRKFCINI…LVLGVLSGEF (298 aa)). The helical transmembrane segment at 52 to 70 (PFEMIILLTIFANCVALAI) threads the bilayer. Residues 71 to 88 (FLPMPEDDTNSTNSVLEK) are Extracellular-facing. A glycan (N-linked (GlcNAc...) asparagine) is linked at asparagine 80. The helical transmembrane segment at 89-108 (VEYIFLFIFTIESFLKIVAY) threads the bilayer. At 109–120 (GFILHTDAYLRN) the chain is on the cytoplasmic side. The chain crosses the membrane as a helical span at residues 121–139 (GWNILDFTIVSVGVFSVLL). At 140 to 158 (EQISKLQGLPAPGKSSGFN) the chain is on the extracellular side. Residues 159–177 (VKALRAFRVLRPLRLVSGV) form a helical membrane-spanning segment. The Cytoplasmic portion of the chain corresponds to 178 to 196 (PSLQVVLNSIIKAMIPLLH). The helical transmembrane segment at 197 to 216 (IALLVLFMIIIYAIVGLELF) threads the bilayer. Over 217–307 (SGKMHKTCYF…WVNDAIGNEW (91 aa)) the chain is Extracellular. A glycan (N-linked (GlcNAc...) asparagine) is linked at asparagine 255. Glutamate 290 contacts Ca(2+). A helical membrane pass occupies residues 308 to 332 (PWIYFVSLILLGSFFVLNLVLGVLS). Residues 333–431 (GEFTKEREKA…RKSRDLVKSR (99 aa)) lie on the Cytoplasmic side of the membrane. The binding to the beta subunit stretch occupies residues 355 to 372 (QAMDEDLRGYLDWITHAE). The II repeat unit spans residues 417–663 (HRLLRRKSRD…VFLAIAVDNL (247 aa)). Residues 432 to 450 (FFYWLVIIIILLNTVIIAT) form a helical membrane-spanning segment. Over 451 to 465 (EHHHQPDSLTKAQDI) the chain is Extracellular. A helical membrane pass occupies residues 466–485 (ANEVLLALFTMEMIVKIYAL). Residues 486–493 (GFQSYFMS) lie on the Cytoplasmic side of the membrane. Residues 494 to 512 (LFNRFDSFVVCTGLLEVML) traverse the membrane as a helical segment. Residues 513–522 (VASDIMSPLG) are Extracellular-facing. Residues 523-541 (ISVLRCIRLLRIFKITRYW) form a helical membrane-spanning segment. Residues 542–560 (TSLNNLVASLLNSVRSIAS) lie on the Cytoplasmic side of the membrane. A helical transmembrane segment spans residues 561–580 (LLLLLFLFMIIFALLGMQMF). Over 581-635 (GGKFDFEDLEVRRSTFDTFPQALITVFQILTGEDWTAVMYNGIMAYGGPTYSGMS) the chain is Extracellular. A Ca(2+)-binding site is contributed by glutamate 613. Residues 636 to 660 (VCIYFIILFVCGNYILLNVFLAIAV) traverse the membrane as a helical segment. Topologically, residues 661–797 (DNLAEAENLT…VLCHRIINAT (137 aa)) are cytoplasmic. Disordered regions lie at residues 672 to 696 (AQKA…TEEE) and 729 to 755 (EIKD…ISPR). A compositionally biased stretch (acidic residues) spans 740 to 749 (PGDDEEEEPE). An III repeat occupies 784-1066 (NKIRVLCHRI…IFVGFVIVTF (283 aa)). Residues 798-816 (TFTNFILLFILLSSISLAA) traverse the membrane as a helical segment. Residues 817-832 (EDPIQPESFRNKVLSK) are Extracellular-facing. A helical membrane pass occupies residues 833-852 (LDIVFTVIFTTEIVLKMTAY). At 853 to 864 (GAFLHKGSFCRN) the chain is on the cytoplasmic side. The chain crosses the membrane as a helical span at residues 865–883 (SFNILDLSVVGVSLISMGI). Residues 884–890 (ESSAISV) lie on the Extracellular side of the membrane. A helical transmembrane segment spans residues 891 to 909 (VKILRVLRVLRPLRAINRA). Residues 910-928 (KGLKHVVQCLFVAIKTIGN) lie on the Cytoplasmic side of the membrane. A helical membrane pass occupies residues 929 to 948 (IVLVTTLLQFMFSCIGVQLF). The Extracellular segment spans residues 949 to 1038 (KGKFYSCTDT…MGPIYNYRIE (90 aa)). The dihydropyridine binding stretch occupies residues 986 to 1075 (RVWSHSDFHF…FQEQGEQEYK (90 aa)). Ca(2+) is bound at residue glutamate 1012. A helical membrane pass occupies residues 1039-1063 (IAVFFIVYIILIAFFMMNIFVGFVI). Over 1064 to 1116 (VTFQEQGEQEYKDCELDKNQRQCVQYALKARPLRRYIPKNPHQYKIWYVVTSS) the chain is Cytoplasmic. Residues 1103 to 1371 (NPHQYKIWYV…LFVAVIMDNF (269 aa)) form an IV repeat. Residues 1117-1135 (YFEYLMFFLITLNTISLGM) form a helical membrane-spanning segment. Residues 1136 to 1150 (QHYGQTAEFSYMSDI) are Extracellular-facing. The chain crosses the membrane as a helical span at residues 1151–1170 (LNVAFTGIFTVEMFLKLAAF). Residues 1171-1178 (KAKGYFGD) lie on the Cytoplasmic side of the membrane. Residues 1179–1197 (PWNVFDFLIVIGSVIDVIL) form a helical membrane-spanning segment. Residues 1198 to 1218 (SEIDTPGIPATPGAEESSRIS) lie on the Extracellular side of the membrane. A helical transmembrane segment spans residues 1219-1237 (ITFFRLFRVLRLVKLLSRG). Residues 1238–1256 (EGVRTLLWTFIKSFQALPY) lie on the Cytoplasmic side of the membrane. Residues 1257-1276 (VALLIVMLFFIYAVIGMQVF) form a helical membrane-spanning segment. At 1277–1343 (GKIALVDGTH…GEEYTCGTSF (67 aa)) the chain is on the extracellular side. Positions 1324-1390 (LCDPMSDFQP…LGPHHLDEFK (67 aa)) are dihydropyridine binding. Residues 1336–1379 (EYTCGTSFAYFYFISFYMLCAFLIINLFVAVIMDNFDYLTRDWS) are phenylalkylamine binding. A helical transmembrane segment spans residues 1344–1368 (AYFYFISFYMLCAFLIINLFVAVIM). At 1369 to 1688 (DNFDYLTRDW…TNSSISQATN (320 aa)) the chain is on the cytoplasmic side. Disordered stretches follow at residues 1635-1664 (PEPV…RLTT) and 1669-1688 (RVQQ…QATN). Residues 1678–1688 (DTNSSISQATN) show a composition bias toward polar residues.

The protein belongs to the calcium channel alpha-1 subunit (TC 1.A.1.11) family. Multisubunit complex consisting of alpha-1, alpha-2, beta and delta subunits in a 1:1:1:1 ratio. The channel activity is directed by the pore-forming and voltage-sensitive alpha-1 subunit. In many cases, this subunit is sufficient to generate voltage-sensitive calcium channel activity. The auxiliary subunits beta and alpha-2/delta linked by a disulfide bridge regulate the channel activity. An additional gamma subunit is present only in skeletal muscle L-type channel. In terms of processing, phosphorylation by PKA stimulates the calcium channel function. As to expression, skeletal muscle specific.

It is found in the membrane. Voltage-sensitive calcium channels (VSCC) mediate the entry of calcium ions into excitable cells and are also involved in a variety of calcium-dependent processes, including muscle contraction, gene expression, cell motility, cell division and cell death. The isoform alpha-1S gives rise to L-type calcium currents. Long-lasting (L-type) calcium channels belong to the 'high-voltage activated' (HVA) group. They are blocked by dihydropyridines (DHP), phenylalkylamines, and by benzothiazepines. Calcium channels containing the alpha-1S subunit play an important role in excitation-contraction coupling in skele|tal muscle. The chain is Voltage-dependent L-type calcium channel subunit alpha-1S from Aquarana catesbeiana (American bullfrog).